Reading from the N-terminus, the 633-residue chain is Molybdenum cofactor biosynthesis protein 1 (633 aa).

Residues M1 to I380 are molybdenum cofactor biosynthesis protein A. S61 is subject to Phosphoserine. In terms of domain architecture, Radical SAM core spans S61–R295. R70 contacts GTP. 2 residues coordinate [4Fe-4S] cluster: C77 and C81. Residue Y83 coordinates S-adenosyl-L-methionine. Residue C84 coordinates [4Fe-4S] cluster. R120 provides a ligand contact to GTP. G124 contacts S-adenosyl-L-methionine. T151 lines the GTP pocket. S175 is a binding site for S-adenosyl-L-methionine. An N6-acetyllysine modification is found at K195. K212 is a binding site for GTP. M246 is an S-adenosyl-L-methionine binding site. The [4Fe-4S] cluster site is built by C309 and C312. Residue R314–R316 participates in GTP binding. C326 is a binding site for [4Fe-4S] cluster. Residues V410 to T633 are molybdenum cofactor biosynthesis protein C. A disordered region spans residues S446–T480. N6-acetyllysine is present on K525. The For molybdenum cofactor biosynthesis protein C activity role is filled by D603.

This sequence in the C-terminal section; belongs to the MoaC family. It in the N-terminal section; belongs to the radical SAM superfamily. MoaA family. Isoform MOCS1A and isoform MOCS1B probably form a heterooligomer. [4Fe-4S] cluster is required as a cofactor.

It catalyses the reaction GTP + AH2 + S-adenosyl-L-methionine = (8S)-3',8-cyclo-7,8-dihydroguanosine 5'-triphosphate + 5'-deoxyadenosine + L-methionine + A + H(+). The enzyme catalyses (8S)-3',8-cyclo-7,8-dihydroguanosine 5'-triphosphate = cyclic pyranopterin phosphate + diphosphate. The protein operates within cofactor biosynthesis; molybdopterin biosynthesis. Its function is as follows. Isoform MOCS1A and isoform MOCS1B probably form a complex that catalyzes the conversion of 5'-GTP to cyclic pyranopterin monophosphate (cPMP). MOCS1A catalyzes the cyclization of GTP to (8S)-3',8-cyclo-7,8-dihydroguanosine 5'-triphosphate and MOCS1B catalyzes the subsequent conversion of (8S)-3',8-cyclo-7,8-dihydroguanosine 5'-triphosphate to cPMP. In Bos taurus (Bovine), this protein is Molybdenum cofactor biosynthesis protein 1 (MOCS1).